The chain runs to 355 residues: S-methyl-5'-thioadenosine phosphorylase (355 aa).

Residues threonine 45, arginine 91–histidine 92, and serine 124–alanine 125 each bind phosphate. Methionine 226 contributes to the substrate binding site. Serine 227 provides a ligand contact to phosphate. Substrate is bound at residue aspartate 250–aspartate 252.

It belongs to the PNP/MTAP phosphorylase family. MTAP subfamily. As to quaternary structure, homotrimer.

It is found in the cytoplasm. It localises to the nucleus. It catalyses the reaction S-methyl-5'-thioadenosine + phosphate = 5-(methylsulfanyl)-alpha-D-ribose 1-phosphate + adenine. It participates in amino-acid biosynthesis; L-methionine biosynthesis via salvage pathway; S-methyl-5-thio-alpha-D-ribose 1-phosphate from S-methyl-5'-thioadenosine (phosphorylase route): step 1/1. Functionally, catalyzes the reversible phosphorylation of S-methyl-5'-thioadenosine (MTA) to adenine and 5-methylthioribose-1-phosphate. Involved in the breakdown of MTA, a major by-product of polyamine biosynthesis. Responsible for the first step in the methionine salvage pathway after MTA has been generated from S-adenosylmethionine. Has broad substrate specificity with 6-aminopurine nucleosides as preferred substrates. This is S-methyl-5'-thioadenosine phosphorylase from Emericella nidulans (strain FGSC A4 / ATCC 38163 / CBS 112.46 / NRRL 194 / M139) (Aspergillus nidulans).